Consider the following 585-residue polypeptide: Arginine--tRNA ligase (585 aa).

Residues 127 to 137 carry the 'HIGH' region motif; sequence PNTNKPLHVGH.

This sequence belongs to the class-I aminoacyl-tRNA synthetase family. As to quaternary structure, monomer.

It is found in the cytoplasm. It catalyses the reaction tRNA(Arg) + L-arginine + ATP = L-arginyl-tRNA(Arg) + AMP + diphosphate. The sequence is that of Arginine--tRNA ligase from Borrelia garinii subsp. bavariensis (strain ATCC BAA-2496 / DSM 23469 / PBi) (Borreliella bavariensis).